Here is a 372-residue protein sequence, read N- to C-terminus: Alanine racemase (372 aa).

Lys-37 serves as the catalytic Proton acceptor; specific for D-alanine. The residue at position 37 (Lys-37) is an N6-(pyridoxal phosphate)lysine. Arg-136 contributes to the substrate binding site. Tyr-265 functions as the Proton acceptor; specific for L-alanine in the catalytic mechanism. A substrate-binding site is contributed by Met-313.

It belongs to the alanine racemase family. It depends on pyridoxal 5'-phosphate as a cofactor.

The catalysed reaction is L-alanine = D-alanine. It participates in amino-acid biosynthesis; D-alanine biosynthesis; D-alanine from L-alanine: step 1/1. In terms of biological role, catalyzes the interconversion of L-alanine and D-alanine. May also act on other amino acids. The sequence is that of Alanine racemase (alr) from Synechocystis sp. (strain ATCC 27184 / PCC 6803 / Kazusa).